The chain runs to 338 residues: 1-aminocyclopropane-1-carboxylate deaminase (338 aa).

An N6-(pyridoxal phosphate)lysine modification is found at Lys-51. Catalysis depends on Ser-78, which acts as the Nucleophile.

It belongs to the ACC deaminase/D-cysteine desulfhydrase family. Homotrimer. It depends on pyridoxal 5'-phosphate as a cofactor.

It carries out the reaction 1-aminocyclopropane-1-carboxylate + H2O = 2-oxobutanoate + NH4(+). Catalyzes a cyclopropane ring-opening reaction, the irreversible conversion of 1-aminocyclopropane-1-carboxylate (ACC) to ammonia and alpha-ketobutyrate. Allows growth on ACC as a nitrogen source. The polypeptide is 1-aminocyclopropane-1-carboxylate deaminase (Variovorax paradoxus (strain S110)).